We begin with the raw amino-acid sequence, 449 residues long: UDP-N-acetylglucosamine 1-carboxyvinyltransferase (449 aa).

Phosphoenolpyruvate is bound at residue 51–52 (KN). Residue R121 participates in UDP-N-acetyl-alpha-D-glucosamine binding. The Proton donor role is filled by C145. C145 is subject to 2-(S-cysteinyl)pyruvic acid O-phosphothioketal. UDP-N-acetyl-alpha-D-glucosamine is bound by residues 150–154 (RPVDQ), D333, and I355.

The protein belongs to the EPSP synthase family. MurA subfamily.

Its subcellular location is the cytoplasm. The enzyme catalyses phosphoenolpyruvate + UDP-N-acetyl-alpha-D-glucosamine = UDP-N-acetyl-3-O-(1-carboxyvinyl)-alpha-D-glucosamine + phosphate. It functions in the pathway cell wall biogenesis; peptidoglycan biosynthesis. Its function is as follows. Cell wall formation. Adds enolpyruvyl to UDP-N-acetylglucosamine. This chain is UDP-N-acetylglucosamine 1-carboxyvinyltransferase, found in Burkholderia mallei (strain ATCC 23344).